We begin with the raw amino-acid sequence, 308 residues long: Acetyl-coenzyme A carboxylase carboxyl transferase subunit beta (308 aa).

Residues 46–308 enclose the CoA carboxyltransferase N-terminal domain; the sequence is LWVKCPDTGE…LMMGRGLKAA (263 aa).

It belongs to the AccD/PCCB family. Acetyl-CoA carboxylase is a heterohexamer composed of biotin carboxyl carrier protein (AccB), biotin carboxylase (AccC) and two subunits each of ACCase subunit alpha (AccA) and ACCase subunit beta (AccD).

The protein localises to the cytoplasm. It catalyses the reaction N(6)-carboxybiotinyl-L-lysyl-[protein] + acetyl-CoA = N(6)-biotinyl-L-lysyl-[protein] + malonyl-CoA. The protein operates within lipid metabolism; malonyl-CoA biosynthesis; malonyl-CoA from acetyl-CoA: step 1/1. Functionally, component of the acetyl coenzyme A carboxylase (ACC) complex. Biotin carboxylase (BC) catalyzes the carboxylation of biotin on its carrier protein (BCCP) and then the CO(2) group is transferred by the transcarboxylase to acetyl-CoA to form malonyl-CoA. This Caulobacter sp. (strain K31) protein is Acetyl-coenzyme A carboxylase carboxyl transferase subunit beta.